The sequence spans 259 residues: 5'-nucleotidase SurE (259 aa).

A divalent metal cation contacts are provided by Asp-13, Asp-14, Ser-44, and Asn-100.

It belongs to the SurE nucleotidase family. Requires a divalent metal cation as cofactor.

The protein localises to the cytoplasm. The catalysed reaction is a ribonucleoside 5'-phosphate + H2O = a ribonucleoside + phosphate. Functionally, nucleotidase that shows phosphatase activity on nucleoside 5'-monophosphates. This chain is 5'-nucleotidase SurE, found in Bacteroides thetaiotaomicron (strain ATCC 29148 / DSM 2079 / JCM 5827 / CCUG 10774 / NCTC 10582 / VPI-5482 / E50).